We begin with the raw amino-acid sequence, 328 residues long: Malate dehydrogenase 1 (328 aa).

12 to 18 contacts NAD(+); it reads GAAGQIA. Residues Arg93 and Arg99 each coordinate substrate. NAD(+) is bound by residues Asn106, Gln113, and 130-132; that span reads VGN. Residues Asn132 and Arg163 each coordinate substrate. His188 functions as the Proton acceptor in the catalytic mechanism.

The protein belongs to the LDH/MDH superfamily. MDH type 2 family.

The enzyme catalyses (S)-malate + NAD(+) = oxaloacetate + NADH + H(+). Its function is as follows. Catalyzes the reversible oxidation of malate to oxaloacetate. The sequence is that of Malate dehydrogenase 1 from Burkholderia vietnamiensis (strain G4 / LMG 22486) (Burkholderia cepacia (strain R1808)).